Here is a 206-residue protein sequence, read N- to C-terminus: Large ribosomal subunit protein uL4 (206 aa).

This sequence belongs to the universal ribosomal protein uL4 family. As to quaternary structure, part of the 50S ribosomal subunit.

One of the primary rRNA binding proteins, this protein initially binds near the 5'-end of the 23S rRNA. It is important during the early stages of 50S assembly. It makes multiple contacts with different domains of the 23S rRNA in the assembled 50S subunit and ribosome. Its function is as follows. Forms part of the polypeptide exit tunnel. This Bradyrhizobium sp. (strain BTAi1 / ATCC BAA-1182) protein is Large ribosomal subunit protein uL4.